A 516-amino-acid polypeptide reads, in one-letter code: GPI mannosyltransferase 4 (516 aa).

The Lumenal portion of the chain corresponds to 1–5 (MMRYQ). A helical membrane pass occupies residues 6 to 26 (WWLYLVYAIGLMLCLGPSYIH). The Cytoplasmic segment spans residues 27 to 60 (PDEHFQCIEILAMQFMKVKGTIPWEFKSKFAARS). The chain crosses the membrane as a helical span at residues 61–81 (YGPLLLVYGPLFTILESFPEI). Topologically, residues 82–175 (QDNPALILYS…IQRSNFKNSV (94 aa)) are lumenal. The chain crosses the membrane as a helical span at residues 176-196 (ILGLIFSFGVFNRVTFPAFIF). Over 197-210 (LPCLILFWKFYRVH) the chain is Cytoplasmic. The helical transmembrane segment at 211–231 (WKSFSLLLLSFSFSSCLFVLI) threads the bilayer. Topologically, residues 232 to 270 (DTNIYNNGKGFVITPLNNLKYNLNVQNLQVHGLHPRYTH) are lumenal. The chain crosses the membrane as a helical span at residues 271 to 291 (LLVNLPQIVGPVLLLAIFSGY). Residues 292 to 295 (KLDK) lie on the Cytoplasmic side of the membrane. The helical transmembrane segment at 296–316 (LSTYAIISGLLFLSFFQHQEL) threads the bilayer. Position 317 (R317) is a topological domain, lumenal. A helical membrane pass occupies residues 318–338 (FLVPLVPLLVTNLNWTPLSST). Residues 339-348 (LVNKKIFKGT) lie on the Cytoplasmic side of the membrane. A helical transmembrane segment spans residues 349–369 (WLLFNIIMAFIMGISHQAGII). Residues 370–516 (QFLGDYFHFR…GLTVYSIELL (147 aa)) lie on the Lumenal side of the membrane. Residues N403 and N452 are each glycosylated (N-linked (GlcNAc...) asparagine).

The protein belongs to the glycosyltransferase 22 family. PIGZ subfamily.

Its subcellular location is the endoplasmic reticulum membrane. It functions in the pathway glycolipid biosynthesis; glycosylphosphatidylinositol-anchor biosynthesis. Alpha-1,2-mannosyltransferase involved in glycosylphosphatidylinositol-anchor biosynthesis. Transfers a fourth mannose to trimannosyl-GPIs during GPI precursor assembly. The presence of a fourth mannose in GPI is essential in fungi. Involved in plasmid maintenance with SMP2. The chain is GPI mannosyltransferase 4 (SMP3) from Saccharomyces cerevisiae (strain ATCC 204508 / S288c) (Baker's yeast).